The primary structure comprises 369 residues: Chorismate synthase (369 aa).

Positions 48 and 54 each coordinate NADP(+). Residues 125–127 (RSS), 238–239 (NA), glycine 278, 293–297 (KPTSS), and arginine 319 contribute to the FMN site.

The protein belongs to the chorismate synthase family. Homotetramer. It depends on FMNH2 as a cofactor.

The enzyme catalyses 5-O-(1-carboxyvinyl)-3-phosphoshikimate = chorismate + phosphate. The protein operates within metabolic intermediate biosynthesis; chorismate biosynthesis; chorismate from D-erythrose 4-phosphate and phosphoenolpyruvate: step 7/7. Catalyzes the anti-1,4-elimination of the C-3 phosphate and the C-6 proR hydrogen from 5-enolpyruvylshikimate-3-phosphate (EPSP) to yield chorismate, which is the branch point compound that serves as the starting substrate for the three terminal pathways of aromatic amino acid biosynthesis. This reaction introduces a second double bond into the aromatic ring system. The polypeptide is Chorismate synthase (Cupriavidus metallidurans (strain ATCC 43123 / DSM 2839 / NBRC 102507 / CH34) (Ralstonia metallidurans)).